The primary structure comprises 162 residues: NADH-quinone oxidoreductase subunit I 2 (162 aa).

4Fe-4S ferredoxin-type domains follow at residues 53–83 (LRRYPNGEERCIACKLCEAVCPALAITIESE) and 93–122 (TRYDIDLTKCIFCGFCEESCPVDSIVETRI). Positions 63, 66, 69, 73, 102, 105, 108, and 112 each coordinate [4Fe-4S] cluster.

The protein belongs to the complex I 23 kDa subunit family. NDH-1 is composed of 14 different subunits. Subunits NuoA, H, J, K, L, M, N constitute the membrane sector of the complex. The cofactor is [4Fe-4S] cluster.

Its subcellular location is the cell inner membrane. The catalysed reaction is a quinone + NADH + 5 H(+)(in) = a quinol + NAD(+) + 4 H(+)(out). NDH-1 shuttles electrons from NADH, via FMN and iron-sulfur (Fe-S) centers, to quinones in the respiratory chain. The immediate electron acceptor for the enzyme in this species is believed to be ubiquinone. Couples the redox reaction to proton translocation (for every two electrons transferred, four hydrogen ions are translocated across the cytoplasmic membrane), and thus conserves the redox energy in a proton gradient. The sequence is that of NADH-quinone oxidoreductase subunit I 2 from Nitrosospira multiformis (strain ATCC 25196 / NCIMB 11849 / C 71).